Here is a 150-residue protein sequence, read N- to C-terminus: Con-Ins Im1 (150 aa).

An N-terminal signal peptide occupies residues M1–A25. Intrachain disulfides connect C31–C133, C46–C136, C58–C149, and C135–C140. Residues G64–P111 constitute a propeptide, c peptide. E144 is modified (4-carboxyglutamate; partial).

This sequence belongs to the insulin family. Heterodimer of A and B chains; disulfide-linked. In terms of tissue distribution, expressed by the venom gland.

Its subcellular location is the secreted. In terms of biological role, this venom insulin facilitates prey capture by rapidly inducing hypoglycemic shock. Intraperitoneal injection of this peptide into zebrafish lowers blood glucose with the same potency than human insulin. In vivo, when applied to water, this peptide reduces overall locomotor activity of zebrafish larvae, observed as a significant decrease in the percentage of time spent swimming and movement frequency. This Conus imperialis (Imperial cone) protein is Con-Ins Im1.